We begin with the raw amino-acid sequence, 153 residues long: 3-hydroxyacyl-[acyl-carrier-protein] dehydratase FabZ (153 aa).

Residue His54 is part of the active site.

It belongs to the thioester dehydratase family. FabZ subfamily.

It is found in the cytoplasm. It carries out the reaction a (3R)-hydroxyacyl-[ACP] = a (2E)-enoyl-[ACP] + H2O. Involved in unsaturated fatty acids biosynthesis. Catalyzes the dehydration of short chain beta-hydroxyacyl-ACPs and long chain saturated and unsaturated beta-hydroxyacyl-ACPs. The polypeptide is 3-hydroxyacyl-[acyl-carrier-protein] dehydratase FabZ (Shewanella sediminis (strain HAW-EB3)).